Here is a 666-residue protein sequence, read N- to C-terminus: MEGAKLSAVRIAVREAPYRQFLGRREPSVVQFPPWSDGKSLIVDQNEFHFDHAFPATISQDEMYQALILPLVDKLLEGFQCTALAYGQTGTGKSYSMGMTPPGEILPEHLGILPRALGDIFERVTARQENNKDAIQVYASFIEIYNEKPFDLLGSTPHMPMVAARCQRCTCLPLHSQADLHHILELGTRNRRVRPTNMNSNSSRSHAIVTIHVKSKTHHSRMNIVDLAGSEGVRRTGHEGVARQEGVNINLGLLSINKVVMSMAAGHTVIPYRDSVLTTVLQASLTAQSYLTFLACISPHQCDLSETLSTLRFGTSAKKLRLNPMQVARQKQSLAARTTHVFRQALCTSTAIKSNAANHNSIVVPKSKYSTTKPLSAVLHRTRSELGMTPKAKKRARELLELEETTLELSSIHIQDSSLSLLGFHSDSDKDRHLMPPPTGQEPRQASSQNSTLMGIVEETEPKESSKVQQSMVAPTVPTTVRCQLFNTTISPISLRASSSQRELSGIQPMEETVVASPQQPCLRRSVRLASSMRSQNYGAIPKVMNLRRSTRLAGIREHATSVVVKNETDAIPHLRSTVQKKRTRNVKPAPKAWMANNTKCFLDLLNNGNVKQLQEIPGIGPKSAFSLALHRSRLGCFENLFQVKSLPIWSGNKWERFCQINCLDT.

Positions 8–320 (AVRIAVREAP…LRFGTSAKKL (313 aa)) constitute a Kinesin motor domain. Position 87–94 (87–94 (GQTGTGKS)) interacts with ATP. The segment at 423-450 (GFHSDSDKDRHLMPPPTGQEPRQASSQN) is disordered. Positions 639 to 666 (ENLFQVKSLPIWSGNKWERFCQINCLDT) form a coiled coil.

It belongs to the TRAFAC class myosin-kinesin ATPase superfamily. Kinesin family. As to expression, in adult female, found in meiotically active ovaries.

It localises to the cytoplasm. It is found in the cytoskeleton. Functionally, required for the distributive chromosome segregation of non-exchange chromosomes during meiosis. May be a microtubule motor required to hold distributively 'paired' chromosomes at the metaphase plate until anaphase. This Drosophila melanogaster (Fruit fly) protein is Kinesin-like protein Nod (nod).